Reading from the N-terminus, the 309-residue chain is Ribonuclease Z (309 aa).

Positions 63, 65, 67, 68, 145, 216, and 274 each coordinate Zn(2+). The Proton acceptor role is filled by aspartate 67.

Belongs to the RNase Z family. As to quaternary structure, homodimer. Zn(2+) is required as a cofactor.

The catalysed reaction is Endonucleolytic cleavage of RNA, removing extra 3' nucleotides from tRNA precursor, generating 3' termini of tRNAs. A 3'-hydroxy group is left at the tRNA terminus and a 5'-phosphoryl group is left at the trailer molecule.. Functionally, zinc phosphodiesterase, which displays some tRNA 3'-processing endonuclease activity. Probably involved in tRNA maturation, by removing a 3'-trailer from precursor tRNA. The chain is Ribonuclease Z from Streptococcus gordonii (strain Challis / ATCC 35105 / BCRC 15272 / CH1 / DL1 / V288).